The following is a 304-amino-acid chain: Ribonuclease Z (304 aa).

His64, His66, Asp68, His69, His141, Asp209, and His267 together coordinate Zn(2+). Asp68 functions as the Proton acceptor in the catalytic mechanism.

Belongs to the RNase Z family. In terms of assembly, homodimer. Zn(2+) is required as a cofactor.

The enzyme catalyses Endonucleolytic cleavage of RNA, removing extra 3' nucleotides from tRNA precursor, generating 3' termini of tRNAs. A 3'-hydroxy group is left at the tRNA terminus and a 5'-phosphoryl group is left at the trailer molecule.. Its function is as follows. Zinc phosphodiesterase, which displays some tRNA 3'-processing endonuclease activity. Probably involved in tRNA maturation, by removing a 3'-trailer from precursor tRNA. This chain is Ribonuclease Z, found in Thermoplasma volcanium (strain ATCC 51530 / DSM 4299 / JCM 9571 / NBRC 15438 / GSS1).